The sequence spans 173 residues: Cytochrome c-type biogenesis protein CcmE (173 aa).

Residues 1 to 8 are Cytoplasmic-facing; that stretch reads MNPRRKSR. A helical; Signal-anchor for type II membrane protein transmembrane segment spans residues 9 to 29; that stretch reads FKLVIFVVLGIAIASGLMLYA. Over 30–173 the chain is Periplasmic; the sequence is LRQNIDLFYT…RDRQEKEGAK (144 aa). Positions 131 and 135 each coordinate heme. A disordered region spans residues 152–173; sequence GIKAADLKGESARDRQEKEGAK. Over residues 156-173 the composition is skewed to basic and acidic residues; it reads ADLKGESARDRQEKEGAK.

The protein belongs to the CcmE/CycJ family.

Its subcellular location is the cell inner membrane. Its function is as follows. Heme chaperone required for the biogenesis of c-type cytochromes. Transiently binds heme delivered by CcmC and transfers the heme to apo-cytochromes in a process facilitated by CcmF and CcmH. This chain is Cytochrome c-type biogenesis protein CcmE, found in Haemophilus influenzae (strain PittEE).